Consider the following 60-residue polypeptide: Cytotoxin KJC3 (60 aa).

Cystine bridges form between cysteine 3–cysteine 21, cysteine 14–cysteine 38, cysteine 42–cysteine 53, and cysteine 54–cysteine 59.

This sequence belongs to the three-finger toxin family. Short-chain subfamily. Type IA cytotoxin sub-subfamily. Monomer in solution; Homodimer and oligomer in the presence of negatively charged lipids forming a pore with a size ranging between 20 and 30 Angstroms. Expressed by the venom gland.

It is found in the secreted. The protein localises to the target cell membrane. Shows cytolytic activity on many different cells by forming pore in lipid membranes. In vivo, increases heart rate or kills the animal by cardiac arrest. In addition, it binds to heparin with high affinity, interacts with Kv channel-interacting protein 1 (KCNIP1) in a calcium-independent manner, and binds to integrin alpha-V/beta-3 (ITGAV/ITGB3) with moderate affinity. The protein is Cytotoxin KJC3 of Naja sputatrix (Malayan spitting cobra).